The following is a 97-amino-acid chain: UPF0235 protein LHK_03181 (97 aa).

It belongs to the UPF0235 family.

This chain is UPF0235 protein LHK_03181, found in Laribacter hongkongensis (strain HLHK9).